We begin with the raw amino-acid sequence, 90 residues long: Putative cytochrome c oxidase subunit 5b-like (90 aa).

3 residues coordinate Zn(2+): Cys43, Cys67, and Cys70.

Belongs to the cytochrome c oxidase subunit 5B (TC 3.D.4.11) family.

The polypeptide is Putative cytochrome c oxidase subunit 5b-like (Arabidopsis thaliana (Mouse-ear cress)).